The chain runs to 346 residues: MTPAPDQLVLRRPDDWHVHLRDDVMLEQVLPATARQFARAIVMPNLRPPVTTVDAAIAYRQRIEAALPDGMAFTPLMTAYLTDDISPDELERGHREGVFTAAKLYPANATTNSAAGVSDLACITAVLERMQAIDMPLLIHGEVTDPDIDIFDREAVFIERHLIPLRRQFPQLRVVFEHITTEQAAQFVVDGDPLMAATITPHHLHINRNAMFQGGLRSDFYCLPVAKRERHRLALRQAATSGDPSFFLGTDSAPHPRAGKESSCGCAGIYNAPYALESYLAVFEAEGALQHFEAFASENGPRFYKLPLNEDTITLKRTAQLVPAQLEGQGLVPFHASEVLDWRLAD.

Zn(2+)-binding residues include His17 and His19. Residues His19–Arg21 and Asn45 each bind substrate. Lys103, His140, and His178 together coordinate Zn(2+). An N6-carboxylysine modification is found at Lys103. Substrate is bound at residue His140. Residue Leu223 coordinates substrate. A Zn(2+)-binding site is contributed by Asp251. Asp251 is a catalytic residue. Substrate is bound by residues His255 and Ala267.

Belongs to the metallo-dependent hydrolases superfamily. DHOase family. Class II DHOase subfamily. Homodimer. Zn(2+) serves as cofactor.

The catalysed reaction is (S)-dihydroorotate + H2O = N-carbamoyl-L-aspartate + H(+). It functions in the pathway pyrimidine metabolism; UMP biosynthesis via de novo pathway; (S)-dihydroorotate from bicarbonate: step 3/3. Functionally, catalyzes the reversible cyclization of carbamoyl aspartate to dihydroorotate. The protein is Dihydroorotase of Synechococcus sp. (strain RCC307).